A 152-amino-acid chain; its full sequence is Flagellar assembly factor FliW (152 aa).

This sequence belongs to the FliW family. In terms of assembly, interacts with translational regulator CsrA and flagellin(s).

It is found in the cytoplasm. Its function is as follows. Acts as an anti-CsrA protein, binds CsrA and prevents it from repressing translation of its target genes, one of which is flagellin. Binds to flagellin and participates in the assembly of the flagellum. The chain is Flagellar assembly factor FliW from Caldicellulosiruptor bescii (strain ATCC BAA-1888 / DSM 6725 / KCTC 15123 / Z-1320) (Anaerocellum thermophilum).